The following is a 336-amino-acid chain: UPF0324 membrane protein PM1461 (336 aa).

10 helical membrane-spanning segments follow: residues 5–23 (TLFL…VNLL), 30–52 (LNAN…NTFY), 62–84 (GVIF…RLTL), 91–113 (GINA…LWLG), 123–140 (IVYL…AAIM), 153–175 (VSIA…PLMY), 221–238 (MIRV…SWLL), 250–271 (ISIP…FSLI), 275–297 (IVAW…LGLT), and 310–332 (PLIL…NVGI).

This sequence belongs to the UPF0324 family.

It is found in the cell membrane. This is UPF0324 membrane protein PM1461 from Pasteurella multocida (strain Pm70).